A 360-amino-acid polypeptide reads, in one-letter code: DNA replication and repair protein RecF (360 aa).

Position 30 to 37 (30 to 37 (GVNGAGKT)) interacts with ATP.

The protein belongs to the RecF family.

The protein localises to the cytoplasm. Its function is as follows. The RecF protein is involved in DNA metabolism; it is required for DNA replication and normal SOS inducibility. RecF binds preferentially to single-stranded, linear DNA. It also seems to bind ATP. The polypeptide is DNA replication and repair protein RecF (Thioalkalivibrio sulfidiphilus (strain HL-EbGR7)).